The chain runs to 179 residues: Orotate phosphoribosyltransferase (179 aa).

5-phospho-alpha-D-ribose 1-diphosphate contacts are provided by residues Arg-94, Lys-95, Lys-98, His-100, and 120-128; that span reads EDTSTTGNS. Thr-124 and Arg-152 together coordinate orotate.

It belongs to the purine/pyrimidine phosphoribosyltransferase family. PyrE subfamily. Homodimer. The cofactor is Mg(2+).

The enzyme catalyses orotidine 5'-phosphate + diphosphate = orotate + 5-phospho-alpha-D-ribose 1-diphosphate. It participates in pyrimidine metabolism; UMP biosynthesis via de novo pathway; UMP from orotate: step 1/2. Functionally, catalyzes the transfer of a ribosyl phosphate group from 5-phosphoribose 1-diphosphate to orotate, leading to the formation of orotidine monophosphate (OMP). This chain is Orotate phosphoribosyltransferase, found in Mycobacterium bovis (strain ATCC BAA-935 / AF2122/97).